A 396-amino-acid chain; its full sequence is Tryptophan synthase beta chain (396 aa).

Lys88 is subject to N6-(pyridoxal phosphate)lysine.

This sequence belongs to the TrpB family. As to quaternary structure, tetramer of two alpha and two beta chains. It depends on pyridoxal 5'-phosphate as a cofactor.

The catalysed reaction is (1S,2R)-1-C-(indol-3-yl)glycerol 3-phosphate + L-serine = D-glyceraldehyde 3-phosphate + L-tryptophan + H2O. Its pathway is amino-acid biosynthesis; L-tryptophan biosynthesis; L-tryptophan from chorismate: step 5/5. The beta subunit is responsible for the synthesis of L-tryptophan from indole and L-serine. This chain is Tryptophan synthase beta chain, found in Shewanella sp. (strain W3-18-1).